The chain runs to 341 residues: Hygromycin-B 4-O-kinase (341 aa).

D198 serves as the catalytic Proton acceptor.

Belongs to the aminoglycoside phosphotransferase family.

The catalysed reaction is hygromycin B + ATP = 4-O-phosphohygromycin B + ADP + H(+). In terms of biological role, the aminoglycoside phosphotransferases achieve inactivation of their antibiotic substrates by phosphorylation. Only phosphorylates hygromycin and closely related compounds such as demethyl analogs and destomycin. The chain is Hygromycin-B 4-O-kinase (hph) from Escherichia coli.